Here is a 168-residue protein sequence, read N- to C-terminus: uncharacterized protein (168 aa).

Residues 36 to 56 (LNWWQLIVVVGIAISGIAAIA) traverse the membrane as a helical segment. A glycan (N-linked (GlcNAc...) asparagine; by host) is linked at Asn74. Helical transmembrane passes span 86–106 (FIII…LAWL), 115–135 (KLLT…ALTI), and 143–163 (MVKL…GFFI). A glycan (N-linked (GlcNAc...) asparagine; by host) is linked at Asn164.

It localises to the membrane. This is an uncharacterized protein from Acanthamoeba polyphaga mimivirus (APMV).